The primary structure comprises 419 residues: Histidine--tRNA ligase (419 aa).

It belongs to the class-II aminoacyl-tRNA synthetase family. In terms of assembly, homodimer.

The protein resides in the cytoplasm. The enzyme catalyses tRNA(His) + L-histidine + ATP = L-histidyl-tRNA(His) + AMP + diphosphate + H(+). This chain is Histidine--tRNA ligase, found in Halothermothrix orenii (strain H 168 / OCM 544 / DSM 9562).